Here is a 697-residue protein sequence, read N- to C-terminus: Gametogenetin-binding protein 2 (697 aa).

The residue at position 360 (S360) is a Phosphoserine.

Interacts with GGN. Expressed in heart, brain, placenta, lung, liver, skeletal muscle, kidney and pancreas. Expressed more abundantly in heart, pancreas and skeletal muscle.

Its subcellular location is the cytoplasmic vesicle. In terms of biological role, may be involved in spermatogenesis. In Homo sapiens (Human), this protein is Gametogenetin-binding protein 2 (GGNBP2).